Reading from the N-terminus, the 184-residue chain is Protein GrpE (184 aa).

Residues 1–35 form a disordered region; it reads MTQENQNPPPEQEDVAADPQVNEAAASEPAAVKTP.

Belongs to the GrpE family. As to quaternary structure, homodimer.

It is found in the cytoplasm. Participates actively in the response to hyperosmotic and heat shock by preventing the aggregation of stress-denatured proteins, in association with DnaK and GrpE. It is the nucleotide exchange factor for DnaK and may function as a thermosensor. Unfolded proteins bind initially to DnaJ; upon interaction with the DnaJ-bound protein, DnaK hydrolyzes its bound ATP, resulting in the formation of a stable complex. GrpE releases ADP from DnaK; ATP binding to DnaK triggers the release of the substrate protein, thus completing the reaction cycle. Several rounds of ATP-dependent interactions between DnaJ, DnaK and GrpE are required for fully efficient folding. In Polynucleobacter asymbioticus (strain DSM 18221 / CIP 109841 / QLW-P1DMWA-1) (Polynucleobacter necessarius subsp. asymbioticus), this protein is Protein GrpE.